The chain runs to 247 residues: Nodulation protein H (247 aa).

Positions 1–16 (MTHSTLPPRPFAILAM) are hydrophobic.

Functionally, required for the formation of sulfated nod factor. Proposed to transfer activated sulfate (PAPS) to a N-acetylglucosamine of the nod factor. In Rhizobium meliloti (Ensifer meliloti), this protein is Nodulation protein H (nodH).